Here is a 322-residue protein sequence, read N- to C-terminus: HPr kinase/phosphorylase (322 aa).

Catalysis depends on residues His-143 and Lys-164. 158-165 (GRSGVGKS) contributes to the ATP binding site. Mg(2+) is bound at residue Ser-165. Asp-182 (proton acceptor; for phosphorylation activity. Proton donor; for dephosphorylation activity) is an active-site residue. Positions 206–215 (MEIRGLGILN) are important for the catalytic mechanism of both phosphorylation and dephosphorylation. Glu-207 contributes to the Mg(2+) binding site. Arg-250 is an active-site residue. The important for the catalytic mechanism of dephosphorylation stretch occupies residues 271 to 276 (PVKPGR).

This sequence belongs to the HPrK/P family. In terms of assembly, homohexamer. Requires Mg(2+) as cofactor.

The enzyme catalyses [HPr protein]-L-serine + ATP = [HPr protein]-O-phospho-L-serine + ADP + H(+). The catalysed reaction is [HPr protein]-O-phospho-L-serine + phosphate + H(+) = [HPr protein]-L-serine + diphosphate. Its function is as follows. Catalyzes the ATP- as well as the pyrophosphate-dependent phosphorylation of a specific serine residue in HPr, a phosphocarrier protein of the phosphoenolpyruvate-dependent sugar phosphotransferase system (PTS). HprK/P also catalyzes the pyrophosphate-producing, inorganic phosphate-dependent dephosphorylation (phosphorolysis) of seryl-phosphorylated HPr (P-Ser-HPr). This Leptospira biflexa serovar Patoc (strain Patoc 1 / Ames) protein is HPr kinase/phosphorylase.